We begin with the raw amino-acid sequence, 107 residues long: Serine-rich and transmembrane domain-containing protein 1 (107 aa).

Residues 43–63 (IYVSIFLSLLAFLLLLLIIAL) form a helical membrane-spanning segment.

It localises to the membrane. In Mus musculus (Mouse), this protein is Serine-rich and transmembrane domain-containing protein 1 (Sertm1).